The sequence spans 469 residues: GTPase Der (469 aa).

EngA-type G domains are found at residues 30-193 (PVLA…PEVA) and 203-376 (RRVA…ASWD). Residues 36–43 (GRPNVGKS), 83–87 (DTGGW), 145–148 (NKVD), 209–216 (GKPNVGKS), 256–260 (DTAGL), and 321–324 (NKWD) contribute to the GTP site. One can recognise a KH-like domain in the interval 377–459 (TRIPTGPLNS…PIRINVRVRE (83 aa)).

Belongs to the TRAFAC class TrmE-Era-EngA-EngB-Septin-like GTPase superfamily. EngA (Der) GTPase family. Associates with the 50S ribosomal subunit.

Its function is as follows. GTPase that plays an essential role in the late steps of ribosome biogenesis. This is GTPase Der from Mycobacterium marinum (strain ATCC BAA-535 / M).